A 305-amino-acid chain; its full sequence is Heme A synthase (305 aa).

The Cytoplasmic segment spans residues 1–6 (MKKFLK). Residues 7-27 (VWSVLTIICMTVVVFGGALVT) traverse the membrane as a helical segment. Topologically, residues 28-63 (KTGSADGCGNSWPLCNGQLVRLTDVTPEKLIEFMHR) are extracellular. Residues Cys35 and Cys42 are joined by a disulfide bond. Residue Glu59 is part of the active site. Residue His62 participates in heme o binding. A helical transmembrane segment spans residues 64–84 (MTTGISSIFVIVLAICAWIYM). Residues 85 to 92 (KNRRETKP) are Cytoplasmic-facing. The chain crosses the membrane as a helical span at residues 93–113 (LAIIAVLFLIIQALMGMAAVV). The Extracellular portion of the chain corresponds to 114 to 122 (WGQNPYIMA). The helical transmembrane segment at 123–143 (LHFGISIICYASIVLLALMIF) threads the bilayer. Heme o is bound at residue His124. At 144–160 (EVDRKFDARNLVMGTKL) the chain is on the cytoplasmic side. Residues 161–181 (RINIYALTIYTYLAVYTGALV) form a helical membrane-spanning segment. The Extracellular portion of the chain corresponds to 182–212 (RHEKASMAVPVWPFENGHFIMPTSVQDYVQY). Residues 213-233 (FHRLAAFILIVWLLYVTWLVF) form a helical membrane-spanning segment. His214 contacts heme b. Over 234–240 (RDYRRYR) the chain is Cytoplasmic. A helical membrane pass occupies residues 241–261 (VLTFSMVLSLVFIALQAVTGA). The Extracellular portion of the chain corresponds to 262–271 (LSVYTGVNLY). A helical transmembrane segment spans residues 272-292 (IALAHSLIITMLFALLCYLCL). Residue His276 coordinates heme b. The Cytoplasmic segment spans residues 293–305 (LASRSKSNRLRIK).

It belongs to the COX15/CtaA family. Type 1 subfamily. Interacts with CtaB. Requires heme b as cofactor.

The protein resides in the cell membrane. The enzyme catalyses Fe(II)-heme o + 2 A + H2O = Fe(II)-heme a + 2 AH2. It participates in porphyrin-containing compound metabolism; heme A biosynthesis; heme A from heme O: step 1/1. Its function is as follows. Catalyzes the conversion of heme O to heme A by two successive hydroxylations of the methyl group at C8. The first hydroxylation forms heme I, the second hydroxylation results in an unstable dihydroxymethyl group, which spontaneously dehydrates, resulting in the formyl group of heme A. The protein is Heme A synthase of Listeria monocytogenes serotype 4b (strain F2365).